A 309-amino-acid polypeptide reads, in one-letter code: MDIQFLGTGAGQPSKARNVSSLALKLLDEINEVWLFDCGEGTQNRILETTIRPRKVSKIFITHLHGDHIFGLPGFLSSRAFQANEEQTDLEIYGPQGIKSFVLTSLRVSGSRLPYRIHFHEFDQDSLGKILETDKFTVYAEELDHTIFCVGYRVMQKDLEGTLDAKKLKAAGVPFGPLFGKIKNGQDLVLEDGTEIKAADYISAPRPGKIITILGDTRKTDASVRLAVNADVLVHESTYGKGDEKIARNHGHSTNMQAAQVAVEAGAKRLLLNHISARFLSKDISKLKKDAATIFENVHVVKDLEEVEI.

His-63, His-65, Asp-67, His-68, His-145, Asp-216, and His-274 together coordinate Zn(2+). The active-site Proton acceptor is Asp-67.

This sequence belongs to the RNase Z family. As to quaternary structure, homodimer. Zn(2+) is required as a cofactor.

The enzyme catalyses Endonucleolytic cleavage of RNA, removing extra 3' nucleotides from tRNA precursor, generating 3' termini of tRNAs. A 3'-hydroxy group is left at the tRNA terminus and a 5'-phosphoryl group is left at the trailer molecule.. Zinc phosphodiesterase, which displays some tRNA 3'-processing endonuclease activity. Probably involved in tRNA maturation, by removing a 3'-trailer from precursor tRNA. This chain is Ribonuclease Z, found in Streptococcus pneumoniae serotype 19F (strain G54).